The sequence spans 90 residues: UPF0237 protein NMB1653 (90 aa).

The ACT domain occupies 5–83 (VITVIGKDRV…LDIRMQNEEI (79 aa)).

This sequence belongs to the UPF0237 family.

The sequence is that of UPF0237 protein NMB1653 from Neisseria meningitidis serogroup B (strain ATCC BAA-335 / MC58).